Reading from the N-terminus, the 535-residue chain is MELSPRSPPEMLESDCPSPLELKSAPSKKMWIKLRSLLRYMVKQLENGEVNIEELKKNLEYTASLLEAVYIDETRQILDTEDELRELRSDAVPSEVRDWLASTFTQQTRAKGRRAEEKPKFRSIVHAVQAGIFVERMFRRTYTSVGPTYSTAVHNCLKNLDLWCFDVFSLNRAADDHALRTIVFELLTRHSLISRFKIPTVFLMSFLEALETGYGKYKNPYHNQIHAADVTQTVHCFLLRTGMVHCLSEIEVLAIIFAAAIHDYEHTGTTNSFHIQTKSECAILYNDRSVLENHHISSVFRMMQDDEMNIFINLTKDEFAELRALVIEMVLATDMSCHFQQVKTMKTALQQLERIDKSKALSLLLHAADISHPTKQWSVHSRWTKALMEEFFRQGDKEAELGLPFSPLCDRTSTLVAQSQIGFIDFIVEPTFSVLTDVAEKSVQPLADDDSKPKSQPSFQWRQPSLDVDVGDPNPDVVSFRATWTKYIQENKQKWKERAASGITNQMSIDELSPCEEEAPSSPAEDEHNQNGNLD.

Residues 1-21 (MELSPRSPPEMLESDCPSPLE) form a disordered region. Serine 7 and serine 14 each carry phosphoserine. Calmodulin-binding regions lie at residues 27 to 47 (SKKM…QLEN) and 117 to 140 (EKPK…MFRR). In terms of domain architecture, PDEase spans 145 to 502 (VGPTYSTAVH…QKWKERAASG (358 aa)). The Proton donor role is filled by histidine 222. 4 residues coordinate Zn(2+): histidine 226, histidine 262, aspartate 263, and aspartate 369. Aspartate 263 contributes to the Mg(2+) binding site. 2 disordered regions span residues 444–474 (QPLA…GDPN) and 495–535 (WKER…GNLD). A compositionally biased stretch (polar residues) spans 454 to 463 (KSQPSFQWRQ). 2 positions are modified to phosphoserine: serine 465 and serine 513.

It belongs to the cyclic nucleotide phosphodiesterase family. PDE1 subfamily. As to quaternary structure, homodimer. Requires Zn(2+) as cofactor. It depends on Mg(2+) as a cofactor.

It localises to the cytoplasm. It is found in the cytosol. It catalyses the reaction a nucleoside 3',5'-cyclic phosphate + H2O = a nucleoside 5'-phosphate + H(+). The enzyme catalyses 3',5'-cyclic GMP + H2O = GMP + H(+). The catalysed reaction is 3',5'-cyclic AMP + H2O = AMP + H(+). Type I PDE are activated by the binding of calmodulin in the presence of Ca(2+). Cyclic nucleotide phosphodiesterase with a dual specificity for the second messengers cAMP and cGMP, which are key regulators of many important physiological processes. Has a preference for cGMP as a substrate. The polypeptide is Dual specificity calcium/calmodulin-dependent 3',5'-cyclic nucleotide phosphodiesterase 1B (Mus musculus (Mouse)).